A 509-amino-acid chain; its full sequence is ATP synthase subunit beta (509 aa).

Positions 1–28 are disordered; that stretch reads MAKAATPKETAAAKKPAAPKKAASAKTA. 187–194 contributes to the ATP binding site; the sequence is GGAGVGKT.

This sequence belongs to the ATPase alpha/beta chains family. As to quaternary structure, F-type ATPases have 2 components, CF(1) - the catalytic core - and CF(0) - the membrane proton channel. CF(1) has five subunits: alpha(3), beta(3), gamma(1), delta(1), epsilon(1). CF(0) has three main subunits: a(1), b(2) and c(9-12). The alpha and beta chains form an alternating ring which encloses part of the gamma chain. CF(1) is attached to CF(0) by a central stalk formed by the gamma and epsilon chains, while a peripheral stalk is formed by the delta and b chains.

It localises to the cell inner membrane. It catalyses the reaction ATP + H2O + 4 H(+)(in) = ADP + phosphate + 5 H(+)(out). Produces ATP from ADP in the presence of a proton gradient across the membrane. The catalytic sites are hosted primarily by the beta subunits. The polypeptide is ATP synthase subunit beta (Sinorhizobium medicae (strain WSM419) (Ensifer medicae)).